We begin with the raw amino-acid sequence, 239 residues long: Lipoprotein-releasing system ATP-binding protein LolD (239 aa).

An ABC transporter domain is found at Leu9–Glu239. Gly45 to Ser52 contacts ATP.

It belongs to the ABC transporter superfamily. Lipoprotein translocase (TC 3.A.1.125) family. As to quaternary structure, the complex is composed of two ATP-binding proteins (LolD) and two transmembrane proteins (LolC and LolE).

It localises to the cell inner membrane. Functionally, part of the ABC transporter complex LolCDE involved in the translocation of mature outer membrane-directed lipoproteins, from the inner membrane to the periplasmic chaperone, LolA. Responsible for the formation of the LolA-lipoprotein complex in an ATP-dependent manner. This chain is Lipoprotein-releasing system ATP-binding protein LolD, found in Shewanella frigidimarina (strain NCIMB 400).